The primary structure comprises 166 residues: 3-hydroxyacyl-[acyl-carrier-protein] dehydratase, mitochondrial (166 aa).

The transit peptide at 1 to 17 (MLAKTVFPRGLLVLRSF) directs the protein to the mitochondrion. The MaoC-like domain maps to 34–125 (ETRVFSSEDI…VQAIALRETK (92 aa)).

In terms of assembly, homodimer. Expressed in leaves, roots, siliques and flowers.

The protein localises to the mitochondrion. It carries out the reaction a (3R)-hydroxyacyl-[ACP] = a (2E)-enoyl-[ACP] + H2O. It catalyses the reaction (3R)-hydroxyhexadecanoyl-[ACP] = (2E)-hexadecenoyl-[ACP] + H2O. The enzyme catalyses (3R)-hydroxydecanoyl-[ACP] = (2E)-decenoyl-[ACP] + H2O. It participates in lipid metabolism; fatty acid biosynthesis. Functionally, 3-hydroxyl-[acyl-carrier-protein] (3-hydroxyl-ACP) dehydratase required for mitochondrial fatty acid synthesis (mtFAS). MtFAS are essential for photorespiration and plant development, probably by influencing mitochondrial membrane lipid composition and other lipid metabolic pathways. The polypeptide is 3-hydroxyacyl-[acyl-carrier-protein] dehydratase, mitochondrial (Arabidopsis thaliana (Mouse-ear cress)).